Here is a 100-residue protein sequence, read N- to C-terminus: Small ubiquitin-related modifier 1 (100 aa).

Over residues 1 to 12 (MSAAGEEDKKPA) the composition is skewed to basic and acidic residues. The interval 1-23 (MSAAGEEDKKPAGGEGGGAHINL) is disordered. The region spanning 19-96 (AHINLKVKGQ…IDAMLHQTGG (78 aa)) is the Ubiquitin-like domain. Gly96 is covalently cross-linked (Glycyl lysine isopeptide (Gly-Lys) (interchain with K-? in acceptor proteins)).

It belongs to the ubiquitin family. SUMO subfamily. In terms of assembly, interacts with SAE2, SCE1 and SIZ1. Covalently attached to a number of proteins.

It is found in the nucleus. Its subcellular location is the cytoplasm. Its function is as follows. Ubiquitin-like protein which can be covalently attached to target lysines as a monomer. Does not seem to be involved in protein degradation and may function as an antagonist of ubiquitin in the degradation process. This chain is Small ubiquitin-related modifier 1 (SUMO1), found in Oryza sativa subsp. japonica (Rice).